The following is a 381-amino-acid chain: Cytochrome b (381 aa).

The next 4 helical transmembrane spans lie at 34 to 54, 78 to 99, 114 to 134, and 179 to 199; these read FGSL…FLAM, WLIR…YLHI, WNIG…GYVL, and FFAF…IHLL. Residues histidine 84 and histidine 98 each coordinate heme b. Histidine 183 and histidine 197 together coordinate heme b. Position 202 (histidine 202) interacts with a ubiquinone. The next 4 helical transmembrane spans lie at 227-247, 289-309, 321-341, and 348-368; these read YKDL…ALFT, LGGV…PLLH, LTQI…WIGG, and FIMV…IIMP.

It belongs to the cytochrome b family. In terms of assembly, the cytochrome bc1 complex contains 3 respiratory subunits (MT-CYB, CYC1 and UQCRFS1), 2 core proteins (UQCRC1 and UQCRC2) and probably 6 low-molecular weight proteins. Heme b is required as a cofactor.

Its subcellular location is the mitochondrion inner membrane. Functionally, component of the ubiquinol-cytochrome c reductase complex (complex III or cytochrome b-c1 complex) that is part of the mitochondrial respiratory chain. The b-c1 complex mediates electron transfer from ubiquinol to cytochrome c. Contributes to the generation of a proton gradient across the mitochondrial membrane that is then used for ATP synthesis. The sequence is that of Cytochrome b (mt-cyb) from Negaprion brevirostris (Lemon shark).